Here is a 915-residue protein sequence, read N- to C-terminus: Pentatricopeptide repeat-containing protein At5g65560 (915 aa).

PPR repeat units follow at residues isoleucine 182 to proline 216, asparagine 217 to proline 251, aspartate 252 to arginine 286, asparagine 287 to proline 321, threonine 322 to proline 356, asparagine 357 to proline 391, asparagine 392 to proline 426, asparagine 427 to proline 460, aspartate 461 to proline 495, aspartate 496 to proline 530, asparagine 531 to proline 565, asparagine 566 to proline 600, threonine 601 to proline 635, aspartate 636 to proline 670, aspartate 671 to proline 705, lysine 724 to proline 758, asparagine 759 to proline 794, serine 795 to proline 829, glutamine 830 to glutamate 864, and aspartate 865 to phenylalanine 899.

Belongs to the PPR family. P subfamily.

In Arabidopsis thaliana (Mouse-ear cress), this protein is Pentatricopeptide repeat-containing protein At5g65560.